Consider the following 141-residue polypeptide: Hemoglobin subunit alpha (141 aa).

One can recognise a Globin domain in the interval 1 to 141; sequence VLSPADKTNV…VSTVLTSKYR (141 aa). At Ser3 the chain carries Phosphoserine. An N6-succinyllysine modification is found at Lys7. A Phosphothreonine modification is found at Thr8. The residue at position 11 (Lys11) is an N6-succinyllysine. Lys16 carries the N6-acetyllysine; alternate modification. Lys16 carries the post-translational modification N6-succinyllysine; alternate. Ser35 bears the Phosphoserine mark. Lys40 is modified (N6-succinyllysine). An O2-binding site is contributed by His58. His87 serves as a coordination point for heme b. Ser102 is subject to Phosphoserine. Thr108 is modified (phosphothreonine). Ser124 and Ser131 each carry phosphoserine. Phosphothreonine occurs at positions 134 and 137. At Ser138 the chain carries Phosphoserine.

The protein belongs to the globin family. As to quaternary structure, heterotetramer of two alpha chains and two beta chains. Red blood cells.

In terms of biological role, involved in oxygen transport from the lung to the various peripheral tissues. Its function is as follows. Hemopressin acts as an antagonist peptide of the cannabinoid receptor CNR1. Hemopressin-binding efficiently blocks cannabinoid receptor CNR1 and subsequent signaling. The sequence is that of Hemoglobin subunit alpha (HBA) from Physeter macrocephalus (Sperm whale).